Reading from the N-terminus, the 441-residue chain is 3-phosphoshikimate 1-carboxyvinyltransferase (441 aa).

3-phosphoshikimate contacts are provided by K22, S23, and R27. Phosphoenolpyruvate is bound at residue K22. Positions 95 and 123 each coordinate phosphoenolpyruvate. 3-phosphoshikimate contacts are provided by S168, Q170, D321, and K348. Q170 provides a ligand contact to phosphoenolpyruvate. Catalysis depends on D321, which acts as the Proton acceptor. Residues R352 and R400 each coordinate phosphoenolpyruvate.

The protein belongs to the EPSP synthase family. As to quaternary structure, monomer.

It localises to the cytoplasm. The catalysed reaction is 3-phosphoshikimate + phosphoenolpyruvate = 5-O-(1-carboxyvinyl)-3-phosphoshikimate + phosphate. It participates in metabolic intermediate biosynthesis; chorismate biosynthesis; chorismate from D-erythrose 4-phosphate and phosphoenolpyruvate: step 6/7. Its function is as follows. Catalyzes the transfer of the enolpyruvyl moiety of phosphoenolpyruvate (PEP) to the 5-hydroxyl of shikimate-3-phosphate (S3P) to produce enolpyruvyl shikimate-3-phosphate and inorganic phosphate. In Novosphingobium aromaticivorans (strain ATCC 700278 / DSM 12444 / CCUG 56034 / CIP 105152 / NBRC 16084 / F199), this protein is 3-phosphoshikimate 1-carboxyvinyltransferase.